The chain runs to 723 residues: CSC1-like protein ERD4 (723 aa).

At 1–5 (MEFAS) the chain is on the cytoplasmic side. A helical membrane pass occupies residues 6–26 (FLVSLGTSAIIFVVLMFLFTW). The Extracellular segment spans residues 27–90 (LSRRPGNVPV…TAVYFVFQST (64 aa)). Residues 91-111 (VLGIFALSALLLLPTLLPIAA) traverse the membrane as a helical segment. Over 112–148 (TDNNLETSRSATDTTSNGTFSQLDNLSMANITKSSSR) the chain is Cytoplasmic. A helical transmembrane segment spans residues 149-169 (LWAFLGAVYWVSVVTYFMLWK). The Extracellular segment spans residues 170-364 (AYKHVAALRA…IKFFSRIVRQ (195 aa)). The chain crosses the membrane as a helical span at residues 365–385 (YVIYFLVAITILFYMIPIAFV). The Cytoplasmic portion of the chain corresponds to 386 to 416 (SAITTLANLQKALPFLKPIVDIAFIRTILES). A helical transmembrane segment spans residues 417 to 437 (YLPQIALIVFLAMLPKFLMFL). Residues 438–456 (SKSEGIPSQSHAIRATSGK) are Extracellular-facing. The chain crosses the membrane as a helical span at residues 457-477 (YFYFSVLNVFIGVTLAGSLFE). Residues 478 to 508 (NLKALEEKPNSFITLLATSLPKSATFFLTYV) lie on the Cytoplasmic side of the membrane. Residues 509–529 (ALKFFVGYGLELSRIIPLIIF) traverse the membrane as a helical segment. The Extracellular portion of the chain corresponds to 530–572 (HLKKKYLCKTEAEVKEAWYPGDLSYATRVPSDMLILTITFCYS). Residues 573 to 593 (VIAPLILVFGVIYFGLGWLIL) form a helical membrane-spanning segment. The Cytoplasmic portion of the chain corresponds to 594-614 (RNQALKVYVPSYESYGRMWPH). Residues 615–635 (IHTRILAALFLFQLVMFGYLG) traverse the membrane as a helical segment. Residues 636-637 (VK) lie on the Extracellular side of the membrane. A helical membrane pass occupies residues 638 to 658 (IFVWAILLVPLIFISLIFGYV). Residues 659–723 (CRQKFYGGFE…YQDYAAISAA (65 aa)) lie on the Cytoplasmic side of the membrane.

Belongs to the CSC1 (TC 1.A.17) family.

The protein resides in the plastid. It localises to the chloroplast membrane. Acts as an osmosensitive calcium-permeable cation channel. In Brassica juncea (Indian mustard), this protein is CSC1-like protein ERD4 (ERD4).